Here is a 128-residue protein sequence, read N- to C-terminus: Translation initiation factor 5A (128 aa).

Lys-35 bears the Hypusine mark.

This sequence belongs to the eIF-5A family.

The protein resides in the cytoplasm. Functions by promoting the formation of the first peptide bond. This chain is Translation initiation factor 5A, found in Methanosarcina barkeri (strain Fusaro / DSM 804).